Reading from the N-terminus, the 123-residue chain is MADLQKIVDDLSSLTVLEAAELAKLLEEKWGVSAAAAVAVAGPAAAAAAPAEEKTEFTVVLAAAGEKKIEVIKEVRAITGLGLKEAKDLVEGAPKPVKEGVNKDEADKIKAQLEKAGAKVELK.

It belongs to the bacterial ribosomal protein bL12 family. As to quaternary structure, homodimer. Part of the ribosomal stalk of the 50S ribosomal subunit. Forms a multimeric L10(L12)X complex, where L10 forms an elongated spine to which 2 to 4 L12 dimers bind in a sequential fashion. Binds GTP-bound translation factors.

Its function is as follows. Forms part of the ribosomal stalk which helps the ribosome interact with GTP-bound translation factors. Is thus essential for accurate translation. The chain is Large ribosomal subunit protein bL12 from Rhodopseudomonas palustris (strain BisB18).